The chain runs to 662 residues: MIFIMKLKNLLPIFCFFLVSFSISSAQKCGKTGLFKPNDKYDINRHLLLSSLASNVSARGGFYNASIGQGPDRLYASGTCIQGSEPELCSACIDSAFIRVIKKCHNQTEALDWSSFNEEYPCMIRYSNRSFFGLLEMTPFFKNYNATDFQVNLTEFYQKWEALMLGVIADAISSPNPKFYGAGTGKIGIQTVYAFVLCSKDISPWNCSRCLRGNVDNYKLSCSGKPRGHSFSPSCYMRWDLYQFYGFIEYRASPTLPREKGRISELSDDGGKISTRNILGITVALAFFITVLLVLGYALSRRRKAYQEFATENDITTSGSLQFDFKAIEAATNNFQKSNKLGHGGFGEVFKGTFPNGTEVAVKRLSKISGQGEEEFKNEVLLVAKLQHRNLVRLLGFSVEGEEKILVYEYMPNKSLDYFLFDHRRRGQLDWRTRYNIIRGVTRGILYLHQDSRLTIIHRDLKAGNILLDVDMNPKIADFGVARNFRVDQTEATTGRVVGTFGYMPPEYVANGQFSMKSDVYSFGVLILEIIVGKKSSSFHEIDGSVGNLVTYVWRLWNNESFLELVDPAMGESYDKDEVIRCIHISLLCVQENPADRPTMSTVFQMLTNTFLTLPVPQLPGFVFRVRSEPNPLAERLEPGPSTTMSFACSIDDASITSVDLR.

A signal peptide spans 1-26 (MIFIMKLKNLLPIFCFFLVSFSISSA). Gnk2-homologous domains are found at residues 27 to 131 (QKCG…NRSF) and 137 to 244 (MTPF…LYQF). Residues 27 to 277 (QKCGKTGLFK…DDGGKISTRN (251 aa)) are Extracellular-facing. Residues asparagine 55, asparagine 64, asparagine 106, asparagine 128, asparagine 145, asparagine 152, and asparagine 206 are each glycosylated (N-linked (GlcNAc...) asparagine). A helical transmembrane segment spans residues 278–298 (ILGITVALAFFITVLLVLGYA). Topologically, residues 299 to 662 (LSRRRKAYQE…DASITSVDLR (364 aa)) are cytoplasmic. Residues 335 to 612 (FQKSNKLGHG…VFQMLTNTFL (278 aa)) form the Protein kinase domain. Residues 341–349 (LGHGGFGEV) and lysine 363 each bind ATP. The Proton acceptor role is filled by aspartate 460.

The protein belongs to the protein kinase superfamily. Ser/Thr protein kinase family. CRK subfamily.

The protein resides in the membrane. The catalysed reaction is L-seryl-[protein] + ATP = O-phospho-L-seryl-[protein] + ADP + H(+). It catalyses the reaction L-threonyl-[protein] + ATP = O-phospho-L-threonyl-[protein] + ADP + H(+). This chain is Putative cysteine-rich receptor-like protein kinase 16 (CRK16), found in Arabidopsis thaliana (Mouse-ear cress).